The sequence spans 121 residues: MTKLDTTAEVKAIARYVRMSPLKVRRVLDQIRGRSYREALIILEFMPYKACEPVLKVLRSAVANAEHNEGLEPADLVVSQAFADGGPSLRRFRPRAQGRAYQIRKPTCHITVAVAPALADN.

The protein belongs to the universal ribosomal protein uL22 family. Part of the 50S ribosomal subunit.

Functionally, this protein binds specifically to 23S rRNA; its binding is stimulated by other ribosomal proteins, e.g. L4, L17, and L20. It is important during the early stages of 50S assembly. It makes multiple contacts with different domains of the 23S rRNA in the assembled 50S subunit and ribosome. The globular domain of the protein is located near the polypeptide exit tunnel on the outside of the subunit, while an extended beta-hairpin is found that lines the wall of the exit tunnel in the center of the 70S ribosome. The chain is Large ribosomal subunit protein uL22 from Synechocystis sp. (strain ATCC 27184 / PCC 6803 / Kazusa).